Here is a 349-residue protein sequence, read N- to C-terminus: Protein-glutamate methylesterase/protein-glutamine glutaminase 1 (349 aa).

The Response regulatory domain maps to 2–119; it reads RTLIVDDSAF…DVNKAEKELV (118 aa). Asp-53 carries the 4-aspartylphosphate modification. Residues 158–345 form the CheB-type methylesterase domain; that stretch reads ILIGSSTGGP…EEIVKRLEAK (188 aa). Catalysis depends on residues Ser-163, His-190, and Asp-287.

Belongs to the CheB family. Phosphorylated by CheA. Phosphorylation of the N-terminal regulatory domain activates the methylesterase activity.

Its subcellular location is the cytoplasm. The catalysed reaction is [protein]-L-glutamate 5-O-methyl ester + H2O = L-glutamyl-[protein] + methanol + H(+). It carries out the reaction L-glutaminyl-[protein] + H2O = L-glutamyl-[protein] + NH4(+). Functionally, involved in chemotaxis. Part of a chemotaxis signal transduction system that modulates chemotaxis in response to various stimuli. Catalyzes the demethylation of specific methylglutamate residues introduced into the chemoreceptors (methyl-accepting chemotaxis proteins or MCP) by CheR. Also mediates the irreversible deamidation of specific glutamine residues to glutamic acid. This is Protein-glutamate methylesterase/protein-glutamine glutaminase 1 from Methanosarcina acetivorans (strain ATCC 35395 / DSM 2834 / JCM 12185 / C2A).